We begin with the raw amino-acid sequence, 386 residues long: ATP synthase gamma chain 2, chloroplastic (386 aa).

Residues 1-22 are disordered; sequence MTGSISTSWLLSSPSNSNSASS. The transit peptide at 1-60 directs the protein to the chloroplast; it reads MTGSISTSWLLSSPSNSNSASSSESYSFIATLKPVRYYPFQSLTPNRISSRSPLPSIQIR. The active site involves C149. A disulfide bond links C260 and C266.

The protein belongs to the ATPase gamma chain family. F-type ATPases have 2 components, CF(1) - the catalytic core - and CF(0) - the membrane proton channel. CF(1) has five subunits: alpha(3), beta(3), gamma(1), delta(1), epsilon(1). CF(0) has four main subunits: a, b, b' and c.

The protein localises to the plastid. It localises to the chloroplast thylakoid membrane. In terms of biological role, produces ATP from ADP in the presence of a proton gradient across the membrane. The gamma chain is believed to be important in regulating ATPase activity and the flow of protons through the CF(0) complex. In Arabidopsis thaliana (Mouse-ear cress), this protein is ATP synthase gamma chain 2, chloroplastic (ATPC2).